The chain runs to 72 residues: Protein RALF-like 12 (72 aa).

The signal sequence occupies residues 1–17; the sequence is MKAWVIGLLVICAVVIA. 2 cysteine pairs are disulfide-bonded: Cys-34-Cys-43 and Cys-63-Cys-69. A disordered region spans residues 37 to 60; the sequence is PNPPPGCNPPGTEQKNPTPVNEYS.

It belongs to the plant rapid alkalinization factor (RALF) family.

The protein localises to the secreted. Functionally, cell signaling peptide that may regulate plant stress, growth, and development. Mediates a rapid alkalinization of extracellular space by mediating a transient increase in the cytoplasmic Ca(2+) concentration leading to a calcium-dependent signaling events through a cell surface receptor and a concomitant activation of some intracellular mitogen-activated protein kinases. The polypeptide is Protein RALF-like 12 (RALFL12) (Arabidopsis thaliana (Mouse-ear cress)).